We begin with the raw amino-acid sequence, 596 residues long: Fc receptor-like protein 5 (596 aa).

The N-terminal stretch at 1 to 26 (MSGSFSPCVVFTQMWLTLLVVTPVNG) is a signal peptide. Residues 27–496 (QHEAAQQSVV…MTKNRSVPMA (470 aa)) are Extracellular-facing. 5 Ig-like C2-type domains span residues 34–115 (SVVS…VEFS), 106–199 (PSMH…NTVV), 207–294 (PRPV…TAFI), 296–384 (PVQR…SFVS), and 398–483 (PVLT…IRIS). Cystine bridges form between C55-C99, C137-C181, and C228-C277. N-linked (GlcNAc...) asparagine glycosylation is present at N324. Disulfide bonds link C325/C373 and C419/C466. Residue N436 is glycosylated (N-linked (GlcNAc...) asparagine). Residues 497–517 (AGITVGLLIMAVGVFLFYCWF) traverse the membrane as a helical segment. The Cytoplasmic segment spans residues 518 to 596 (SRKAGGKPTS…RSRCQMAEKK (79 aa)). Disordered stretches follow at residues 522 to 544 (GGKPTSDDSRNPSDSEPQEPTYY) and 561 to 596 (EENVIYTEVRRTQPRQKHADQESESPRSRCQMAEKK). Residues 577–596 (KHADQESESPRSRCQMAEKK) show a composition bias toward basic and acidic residues.

In terms of assembly, interacts with CR2. Interacts with CD19. In terms of processing, phosphorylated on cytoplasmic tyrosines; required for interaction with protein tyrosine phosphatases and protein tyrosine kinases. In terms of tissue distribution, preferentially expressed in marginal zone B cells.

It localises to the cell membrane. Functionally, plays an important role in B-cell response to antigen that acts both as a negative or positive coreceptor. Inhibits B-cell receptor (BCR) signaling in the absence of CR2 stimulation but engagement with CR2 and the BCR lead to a superior calcium response compared to CR2 and BCR costimulation. May be involved in B-cell development and differentiation in peripheral lymphoid organs and may be useful markers of B-cell stages. May have an immunoregulatory role in marginal zone B-cells. May play a role in fertilization. The chain is Fc receptor-like protein 5 (Fcrl5) from Mus musculus (Mouse).